A 228-amino-acid chain; its full sequence is UPF0056 membrane protein MJ0972 (228 aa).

Helical transmembrane passes span 22–42 (FYIYGFVSLFITIDPIGLIPI), 68–88 (VVLLLFALFGNYIFGYFGITI), 133–153 (VPLAIPLISGPGAITTTMILI), 163–183 (GVVVLSILSAMLVSGIILSLT), and 201–221 (IMGLLLVAISVQIIFTGIVGL).

The protein belongs to the UPF0056 (MarC) family.

The protein localises to the cell membrane. The sequence is that of UPF0056 membrane protein MJ0972 from Methanocaldococcus jannaschii (strain ATCC 43067 / DSM 2661 / JAL-1 / JCM 10045 / NBRC 100440) (Methanococcus jannaschii).